The primary structure comprises 60 residues: Large ribosomal subunit protein uL30 (60 aa).

The protein belongs to the universal ribosomal protein uL30 family. As to quaternary structure, part of the 50S ribosomal subunit.

This Paracidovorax citrulli (strain AAC00-1) (Acidovorax citrulli) protein is Large ribosomal subunit protein uL30.